The chain runs to 182 residues: MAPLRVERAPGGSQLAVTSAQRPAALRLPPLLLLLLLLLLGAVSTSPESLNQSHPTEDSLLSKGKMEDYETNVLPCWYYYKTSMDSVKDWCNWTLISRYYSNLRYCLEYEADKFGLGFPNPLAESIILEAHLIHFANCSLVQPTFSDPPEDVLLAMIIAPICLIPFLVTLVVWRSKDGDAQA.

Positions 1–45 are cleaved as a signal peptide; it reads MAPLRVERAPGGSQLAVTSAQRPAALRLPPLLLLLLLLLLGAVST. Residues 46–150 lie on the Extracellular side of the membrane; sequence SPESLNQSHP…VQPTFSDPPE (105 aa). 3 N-linked (GlcNAc...) asparagine glycosylation sites follow: Asn-51, Asn-92, and Asn-137. Cystine bridges form between Cys-76/Cys-106 and Cys-91/Cys-138. A helical transmembrane segment spans residues 151-172; it reads DVLLAMIIAPICLIPFLVTLVV. At 173–182 the chain is on the cytoplasmic side; the sequence is WRSKDGDAQA.

This sequence belongs to the RAMP family. As to quaternary structure, heterodimer of CALCRL and RAMP2; the interaction forms the receptor complex for adrenomedullin/ADM. Heterodimer of CALCR and RAMP2; interaction forms the AMYR2 receptor complex for calcitonin/CALC and amylin/IAPP.

It localises to the cell membrane. Functionally, accessory protein that interacts with and modulates the function of G-protein coupled receptors including calcitonin gene-related peptide type 1 receptor (CALCRL) and calcitonin receptor (CALCR). Required for the transport of CALCRL to the plasma membrane. Together with CALCRL, form a receptor complex for adrenomedullin/ADM. Together with CALCR, act as a receptor complex for calcitonin/CT/CALC. Together with CALCR, also act as a receptor complex for amylin/IAPP. The sequence is that of Receptor activity-modifying protein 2 from Rattus norvegicus (Rat).